The following is an 89-amino-acid chain: Probable Fe(2+)-trafficking protein (89 aa).

It belongs to the Fe(2+)-trafficking protein family.

In terms of biological role, could be a mediator in iron transactions between iron acquisition and iron-requiring processes, such as synthesis and/or repair of Fe-S clusters in biosynthetic enzymes. The chain is Probable Fe(2+)-trafficking protein from Stenotrophomonas maltophilia (strain R551-3).